A 97-amino-acid polypeptide reads, in one-letter code: YcgL domain-containing protein Avin_32960 (97 aa).

In terms of domain architecture, YcgL spans 3-87; that stretch reads CICSIYKSPR…PEEEYVEHLP (85 aa).

The protein is YcgL domain-containing protein Avin_32960 of Azotobacter vinelandii (strain DJ / ATCC BAA-1303).